A 90-amino-acid polypeptide reads, in one-letter code: Glycine and tyrosine-rich protein (90 aa).

The first 21 residues, 1–21 (MRRSVLVVFLVLAVTNVAVEA), serve as a signal peptide directing secretion.

In terms of tissue distribution, prismatic layer of shell (at protein level).

It is found in the secreted. This is Glycine and tyrosine-rich protein from Pinctada maxima (Silver-lipped pearl oyster).